The chain runs to 1584 residues: Sterile alpha motif domain-containing protein 9-like (1584 aa).

Positions Trp-14–Ser-79 constitute an SAM domain. The tract at residues Asn-76–Asp-122 is disordered. Basic and acidic residues predominate over residues Pro-80–Glu-112.

Interacts with EEA1. As to expression, widely expressed in adult and fetal tissues. Expressed in the cerebellum. Variable expression in tumors. Down-regulated in breast cancer.

It is found in the early endosome. Its subcellular location is the mitochondrion. Its function is as follows. May be involved in endosome fusion. Mediates down-regulation of growth factor signaling via internalization of growth factor receptors. The protein is Sterile alpha motif domain-containing protein 9-like (SAMD9L) of Homo sapiens (Human).